Consider the following 581-residue polypeptide: Threonine--tRNA ligase (581 aa).

Residues 185–478 (DHRKLGKELD…LVEHYGGAFP (294 aa)) are catalytic. 3 residues coordinate Zn(2+): Cys278, His329, and His455.

Belongs to the class-II aminoacyl-tRNA synthetase family. Homodimer. It depends on Zn(2+) as a cofactor.

The protein resides in the cytoplasm. The catalysed reaction is tRNA(Thr) + L-threonine + ATP = L-threonyl-tRNA(Thr) + AMP + diphosphate + H(+). Its function is as follows. Catalyzes the attachment of threonine to tRNA(Thr) in a two-step reaction: L-threonine is first activated by ATP to form Thr-AMP and then transferred to the acceptor end of tRNA(Thr). Also edits incorrectly charged L-seryl-tRNA(Thr). The sequence is that of Threonine--tRNA ligase from Borreliella burgdorferi (strain ATCC 35210 / DSM 4680 / CIP 102532 / B31) (Borrelia burgdorferi).